The primary structure comprises 38 residues: Mu-agatoxin-Hc1b (38 aa).

Cystine bridges form between Cys3–Cys19, Cys10–Cys24, Cys18–Cys34, and Cys26–Cys32. Ser38 is modified (serine amide).

Belongs to the neurotoxin 07 (Beta/delta-agtx) family. 02 (aga-3) subfamily. In terms of tissue distribution, expressed by the venom gland.

It is found in the secreted. Functionally, insecticidal neurotoxin that induces irreversible neuromuscular blockade in house crickets (A.domesticus). Modifies presynaptic voltage-gated sodium channels (Nav), causing them to open at the normal resting potential of the nerve. This leads to spontaneous release of neurotransmitter and repetitive action potentials in motor neurons. The sequence is that of Mu-agatoxin-Hc1b from Hololena curta (Funnel-web spider).